Consider the following 319-residue polypeptide: Beta-ketoacyl-[acyl-carrier-protein] synthase III (319 aa).

Active-site residues include C113 and H246. An ACP-binding region spans residues 247–251 (QANIR). N276 is a catalytic residue.

The protein belongs to the thiolase-like superfamily. FabH family. As to quaternary structure, homodimer.

It is found in the cytoplasm. It catalyses the reaction malonyl-[ACP] + acetyl-CoA + H(+) = 3-oxobutanoyl-[ACP] + CO2 + CoA. The protein operates within lipid metabolism; fatty acid biosynthesis. Catalyzes the condensation reaction of fatty acid synthesis by the addition to an acyl acceptor of two carbons from malonyl-ACP. Catalyzes the first condensation reaction which initiates fatty acid synthesis and may therefore play a role in governing the total rate of fatty acid production. Possesses both acetoacetyl-ACP synthase and acetyl transacylase activities. Its substrate specificity determines the biosynthesis of branched-chain and/or straight-chain of fatty acids. This is Beta-ketoacyl-[acyl-carrier-protein] synthase III from Ehrlichia ruminantium (strain Welgevonden).